We begin with the raw amino-acid sequence, 154 residues long: Putative ankyrin repeat protein RBE_1220 (154 aa).

ANK repeat units follow at residues Glu78–Gln108 and Asn113–Leu142.

The sequence is that of Putative ankyrin repeat protein RBE_1220 from Rickettsia bellii (strain RML369-C).